The following is a 122-amino-acid chain: Large ribosomal subunit protein bL12 (122 aa).

It belongs to the bacterial ribosomal protein bL12 family. As to quaternary structure, homodimer. Part of the ribosomal stalk of the 50S ribosomal subunit. Forms a multimeric L10(L12)X complex, where L10 forms an elongated spine to which 2 to 4 L12 dimers bind in a sequential fashion. Binds GTP-bound translation factors.

Functionally, forms part of the ribosomal stalk which helps the ribosome interact with GTP-bound translation factors. Is thus essential for accurate translation. The protein is Large ribosomal subunit protein bL12 of Neisseria lactamica.